A 615-amino-acid polypeptide reads, in one-letter code: Coagulation factor XII (615 aa).

The first 19 residues, Met1–Ser19, serve as a signal peptide directing secretion. The 49-residue stretch at Val42–Glu90 folds into the Fibronectin type-II domain. Cystine bridges form between Cys47/Cys73, Cys61/Cys88, Cys98/Cys110, Cys104/Cys119, Cys121/Cys130, Cys135/Cys163, Cys161/Cys170, Cys178/Cys189, Cys183/Cys198, Cys200/Cys209, Cys217/Cys295, Cys238/Cys277, and Cys266/Cys290. The 38-residue stretch at Val94–Gln131 folds into the EGF-like 1 domain. O-linked (Fuc) threonine glycosylation is present at Thr109. One can recognise a Fibronectin type-I domain in the interval Glu133 to Leu173. The region spanning Ala174–Asp210 is the EGF-like 2 domain. In terms of domain architecture, Kringle spans Cys217–Cys295. N-linked (GlcNAc...) asparagine glycosylation occurs at Asn249. The segment at Pro298 to Cys359 is disordered. O-linked (GalNAc...) threonine glycosylation is found at Thr299 and Thr305. Ser308 is a glycosylation site (O-linked (GalNAc...) serine). The segment covering Pro317 to Gln326 has biased composition (pro residues). Residues Pro327–Pro338 are compositionally biased toward low complexity. O-linked (GalNAc...) threonine glycosylation is found at Thr328, Thr329, and Thr337. Intrachain disulfides connect Cys359/Cys486, Cys397/Cys413, Cys405/Cys475, Cys436/Cys439, Cys500/Cys569, Cys532/Cys548, and Cys559/Cys590. Residues Val373–Val614 form the Peptidase S1 domain. The Charge relay system role is filled by His412. Asn433 carries N-linked (GlcNAc...) asparagine glycosylation. The active-site Charge relay system is Asp461. Ser563 serves as the catalytic Charge relay system.

This sequence belongs to the peptidase S1 family. Interacts with HRG; the interaction, which is enhanced in the presence of zinc ions and inhibited by heparin-binding, inhibits factor XII autoactivation and contact-initiated coagulation. Interacts (inactive and activated) with D7L2, an anticoagulant protein from Anopheles gambiae. Interacts (activated) with iripin-8, a serine protease inhibitor from Ixodes ricinus saliva. Interacts (inactive and activated) (via amino acids 1-77) with triafestin-1 and triafestin-2, anticoagulant proteins from Triatoma infestans. Interacts (inactive and activated) (via amino acids 1-77) with short form salivary protein D7R1, an anticoagulant protein from Anopheles stephensi. Interacts (inactive and activated) (via fibronectin type II domain) with haemaphysalin, an anticoagulant protein from Haemaphysalis longicornis. Post-translationally, factor XII is activated by kallikrein in alpha-factor XIIa, which is further converted by trypsin into beta-factor XIIa. Alpha-factor XIIa is composed of an NH2-terminal heavy chain, called coagulation factor XIIa heavy chain, and a COOH-terminal light chain, called coagulation factor XIIa light chain, connected by a disulfide bond. Beta-factor XIIa is composed of 2 chains linked by a disulfide bond, an N-terminal nonapeptide, called beta-factor XIIa part 1, and coagulation factor XIIa light chain, also known in this context as beta-factor XIIa part 2. In terms of processing, O- and N-glycosylated. The O-linked polysaccharides were not identified, but are probably the mucin type linked to GalNAc.

The protein localises to the secreted. It catalyses the reaction Selective cleavage of Arg-|-Ile bonds in factor VII to form factor VIIa and factor XI to form factor XIa.. Its activity is regulated as follows. Activity is promoted in the presence of negatively charged surfaces. Factor XII is a serum glycoprotein that participates in the initiation of blood coagulation, fibrinolysis, and the generation of bradykinin and angiotensin. Prekallikrein is cleaved by factor XII to form kallikrein, which then cleaves factor XII first to alpha-factor XIIa and then trypsin cleaves it to beta-factor XIIa. Alpha-factor XIIa activates factor XI to factor XIa. The sequence is that of Coagulation factor XII (F12) from Homo sapiens (Human).